The primary structure comprises 88 residues: Large ribosomal subunit protein bL27 (88 aa).

The interval 1–21 (MAHKKGQGSTQNNRDSAGRRL) is disordered.

This sequence belongs to the bacterial ribosomal protein bL27 family.

This is Large ribosomal subunit protein bL27 from Helicobacter acinonychis (strain Sheeba).